We begin with the raw amino-acid sequence, 446 residues long: Mannosyltransferase KTR6 (446 aa).

The Cytoplasmic portion of the chain corresponds to 1–8; it reads MHVLLSKK. A helical; Signal-anchor for type II membrane protein transmembrane segment spans residues 9–29; it reads IARFLLISFVFVLALMVTINH. The stem region stretch occupies residues 30 to 114; the sequence is PKTKQMSEQY…MVPSYINHRG (85 aa). Over 30-446 the chain is Lumenal; the sequence is PKTKQMSEQY…DKPEGWDRLP (417 aa). Residues Asn82 and Asn98 are each glycosylated (N-linked (GlcNAc...) asparagine). Positions 115 to 446 are catalytic; sequence SPPKACFVSL…DKPEGWDRLP (332 aa). Glu334 (nucleophile) is an active-site residue.

Belongs to the glycosyltransferase 15 family.

The protein localises to the membrane. Its pathway is protein modification; protein glycosylation. Functionally, glycosyltransferase that transfers an alpha-D-mannosyl residue from GDP-mannose into lipid-linked oligosaccharide, forming an alpha-(1-&gt;2)-D-mannosyl-D-mannose linkage. Required for addition of mannosylphosphate in yeast mannan. Recognizes any oligosaccharides with at least one alpha-1,2-linked mannobiose unit. This chain is Mannosyltransferase KTR6 (KTR6), found in Saccharomyces cerevisiae (strain ATCC 204508 / S288c) (Baker's yeast).